The sequence spans 59 residues: Small ribosomal subunit protein bS21 (59 aa).

A disordered region spans residues 40 to 59; the sequence is KPSVKRKKKSEAARKRKSFR. Residues 43–59 are compositionally biased toward basic residues; sequence VKRKKKSEAARKRKSFR.

The protein belongs to the bacterial ribosomal protein bS21 family.

In Desulforamulus reducens (strain ATCC BAA-1160 / DSM 100696 / MI-1) (Desulfotomaculum reducens), this protein is Small ribosomal subunit protein bS21.